We begin with the raw amino-acid sequence, 959 residues long: MMS19 nucleotide excision repair protein (959 aa).

HEAT repeat units follow at residues 794-828 (QKLF…ATPQ), 832-871 (KLNI…QQDT), 874-915 (QGHL…YPTF), and 918-956 (LPHK…VGAP).

The protein belongs to the MET18/MMS19 family. In terms of assembly, component of the CIA complex. Interacts with Xpd and galla-2. Binds to microtubules. Expressed in embryos (at protein level).

It localises to the cytoplasm. It is found in the cytoskeleton. The protein resides in the spindle. The protein localises to the nucleus. Its subcellular location is the midbody. In terms of biological role, key component of the cytosolic iron-sulfur protein assembly (CIA) complex, a multiprotein complex that mediates the incorporation of iron-sulfur cluster into apoproteins specifically involved in DNA metabolism and genomic integrity. In the CIA complex, MMS19 acts as an adapter between early-acting CIA components and a subset of cellular target iron-sulfur proteins. Essential for diploid cell cycles, organ growth and development. Regulates mitosis by binding to Xpd and thereby competing with the Xpd-mediated repression on the Cdk-activating kinase (CAK) complex. Regulates the centrosomal localization of the MT regulator tacc, a downstream target of aurA kinase. Binds to microtubules (MT). Regulates spindle and astral MT growth, MT stability and bundling. In neuroblasts, necessary for timely and coordinated spindle assembly and orientation which is necessary for mitotic progression. In young embryos, the maternal protein is important for progression through mitosis. The chain is MMS19 nucleotide excision repair protein from Drosophila melanogaster (Fruit fly).